We begin with the raw amino-acid sequence, 565 residues long: SRSF protein kinase 3 (565 aa).

A disordered region spans residues 1–44; it reads MSANAGGSGSVDCGGSSSSSQTSCGPESSGSELTPATPAPRLLQ. Over residues 10–31 the composition is skewed to low complexity; the sequence is SVDCGGSSSSSQTSCGPESSGS. Ser-49 carries the phosphoserine modification. The Protein kinase domain occupies 78 to 563; the sequence is YHVVRKLGWG…AADCLQHPWL (486 aa). ATP-binding positions include 84–92 and Lys-107; that span reads LGWGHFSTV. The Proton acceptor role is filled by Asp-211. The span at 236 to 253 shows a compositional bias: polar residues; it reads WQQSGAQPPSRSTVSTAP. Disordered regions lie at residues 236 to 280 and 295 to 350; these read WQQS…KRLL and AAVQ…QTSG. The span at 262 to 277 shows a compositional bias: basic residues; sequence SKNKRKKMRRKRKQQK. The span at 325 to 350 shows a compositional bias: low complexity; the sequence is AGPSPASSSPVPGGERSLSPSSQTSG. Position 328 is a phosphoserine (Ser-328).

Belongs to the protein kinase superfamily. CMGC Ser/Thr protein kinase family. In terms of tissue distribution, exclusively expressed in skeletal and heart muscle.

It is found in the nucleus. Its subcellular location is the cytoplasm. It carries out the reaction L-seryl-[protein] + ATP = O-phospho-L-seryl-[protein] + ADP + H(+). The catalysed reaction is L-threonyl-[protein] + ATP = O-phospho-L-threonyl-[protein] + ADP + H(+). Functionally, serine/arginine-rich protein-specific kinase which specifically phosphorylates its substrates at serine residues located in regions rich in arginine/serine dipeptides, known as RS domains. Phosphorylates the SR splicing factor SRSF1 and the lamin-B receptor (LBR) in vitro. Required for normal muscle development. The sequence is that of SRSF protein kinase 3 (Srpk3) from Mus musculus (Mouse).